A 475-amino-acid polypeptide reads, in one-letter code: ATP synthase subunit beta, chloroplastic (475 aa).

155–162 (GGAGVGKT) contributes to the ATP binding site.

It belongs to the ATPase alpha/beta chains family. As to quaternary structure, F-type ATPases have 2 components, CF(1) - the catalytic core - and CF(0) - the membrane proton channel. CF(1) has five subunits: alpha(3), beta(3), gamma(1), delta(1), epsilon(1). CF(0) has four main subunits: a(1), b(1), b'(1) and c(9-12).

The protein localises to the plastid. Its subcellular location is the chloroplast thylakoid membrane. The catalysed reaction is ATP + H2O + 4 H(+)(in) = ADP + phosphate + 5 H(+)(out). In terms of biological role, produces ATP from ADP in the presence of a proton gradient across the membrane. The catalytic sites are hosted primarily by the beta subunits. In Ochrosphaera neapolitana, this protein is ATP synthase subunit beta, chloroplastic.